The chain runs to 1356 residues: MASWLYECLCEAELAQYYPHFTALGLQKIDELAKVTMKDYSRLGVHDMNDRKRLFQLIKIIKIMQEEDKALGIPEHPLQASSLYTKPREFRSGPRRQLHFDSPSASKDKMANNETGSLSNFSVDEQKSTYLKVLEHMLPDDSQCQTKIRAPDASAADASMQTETNAPLFSSNYFSPQLGNCDIPVIQRVSHVSGYNYGIPHSCVRQITSENPWTEMEKIRVCVRKRPLGVREVRRGEVNVITVEDKETLLVHEKKEAVDLTQYILQHVFYFDEVFGEACSNQDVYLKTAHPLIQHIFNGGSATCFAYGQTGAGKTYTMIGTHQNPGLYALAAKDIFRQLKVSQSRRNLFVWISFYEIYCGQLYDLLNRRKRLFAREDSKHVVQIAGLRELQVDSVELLLQVILKGSKERSTGATGVNADSSRSHAIIQIQIKDSAKRTFGRISFIDLAGSERAADARDSDRQTKMEGAEINQSLLALKECIRALDQEHTHTPFRQSKLTQVLKDSFIGNAKTCMIANISPSHIATEHTLNTLRYADRVKELKKGVKCCASATSQNQTSANASPKRIQSSPVTLPGDKCSPKKVKLGLQQSLTVAPGPTKVKAHPLASHVPNVPFTSGPKTPGKKSSSRGSPTPEWDMKASPRKGTTRSGHSIKKGAESAPLCSEKSQIGSKIAVGWEGRASDPGEGLLRVRLPTRGKKVQPVQPVQKQLLSRPRLLANSHHLEATQDSKVGTPAGLAPEAWTNPILQQKEREEHLRFYHQQFQQPPLLKQKLNYQPLQRLLCQHRPSEGRLQSETGFPLHSNPENRDGAQAEDLDDSDFSEDSFSHGSSQPAMKQGSTALERSGSSFFLHQDREHSPEEQAAERQQCLLFSSETDGSKKRPADSWVYSRDPIISHRRGALSQSHSPSMVCPDWSKEEDSASSGPSPKDNRAQKPSSSQVDFVHHQKPGEAQVSDIRLEAFTSEVPEQAEGSLSSPSPENGLSFPLSHVAVSGSPDQRDRVCTPLREVSENRVTHTPGRVNSSTPFQEDSGEQIQMCSANASGLMAPLTMSLLETPCHEDLSSLEQIAQDGAGYGFMAEIVGGPAAGHTVPSYDQEAALPVSSATECLWLSSSPPDNRPSGDLPALSPSPIHQHSPDKLPGREAYQTRRPILLPENHMGSKLYDDRAEETELGGSLTFPRKPSSNIHAGVPYSTPFLTSCTGSSNGVGRPWAQERKHPTGVSCQELVSSTDSNKPHYNEDIAWLRHRPISRCLDSDSPVVPSCSSKALRTYCPLTPEQAQQVIIRAHKEQLDEMAELDLKEETLMTQMDSNDFEDFVTQLDEIMALKSRCIQSLRSQLQLYLTSHRPAAAPERTVVS.

Residues 1–64 form the SAM domain; sequence MASWLYECLC…FQLIKIIKIM (64 aa). The disordered stretch occupies residues 93-119; the sequence is GPRRQLHFDSPSASKDKMANNETGSLS. Ser-102 bears the Phosphoserine mark. Positions 218–541 constitute a Kinesin motor domain; the sequence is KIRVCVRKRP…LRYADRVKEL (324 aa). Residue 308–315 participates in ATP binding; that stretch reads GQTGAGKT. Ser-473 carries the post-translational modification Phosphoserine. An interaction with MPHOSPH9 region spans residues 473–702; sequence SLLALKECIR…PTRGKKVQPV (230 aa). Polar residues predominate over residues 552–571; it reads TSQNQTSANASPKRIQSSPV. Disordered stretches follow at residues 552–581, 597–664, 788–840, 897–947, and 964–998; these read TSQNQTSANASPKRIQSSPVTLPGDKCSPK, PTKV…LCSE, EGRL…STAL, RGAL…HQKP, and VPEQAEGSLSSPSPENGLSFPLSHVAVSGSPDQRD. Ser-579 carries the phosphoserine modification. Thr-615 carries the post-translational modification Phosphothreonine; by NEK2. At Ser-616 the chain carries Phosphoserine; by NEK2. 3 positions are modified to phosphoserine: Ser-640, Ser-817, and Ser-820. A compositionally biased stretch (basic residues) spans 640–653; that stretch reads SPRKGTTRSGHSIK. Residues 810-821 are compositionally biased toward acidic residues; the sequence is QAEDLDDSDFSE. A compositionally biased stretch (polar residues) spans 830–840; it reads QPAMKQGSTAL. A compositionally biased stretch (polar residues) spans 970–979; sequence GSLSSPSPEN. Ser-1008 is subject to Phosphoserine. Residues 1109-1140 are disordered; it reads LSSSPPDNRPSGDLPALSPSPIHQHSPDKLPG.

It belongs to the TRAFAC class myosin-kinesin ATPase superfamily. Kinesin family. Interacts with CCP110, CEP97, TALPID3. Interacts with MPHOSPH9. Expressed in brain, spinal cord, and small intestine.

The protein resides in the cytoplasm. Its subcellular location is the cytoskeleton. The protein localises to the microtubule organizing center. It is found in the centrosome. It localises to the centriole. In terms of biological role, microtubule-dependent motor protein that acts as a negative regulator of ciliogenesis by mediating recruitment of CCP110 to mother centriole in cycling cells, leading to restrict nucleation of cilia at centrioles. Mediates depolymerization of microtubules of centriolar origin, possibly to suppress aberrant cilia formation. Following activation by NEK2 involved in disassembly of primary cilium during G2/M phase but does not disassemble fully formed ciliary axonemes. As cilium assembly and disassembly is proposed to coexist in a dynamic equilibrium may suppress nascent cilium assembly and, potentially, ciliar re-assembly in cells that have already disassembled their cilia ensuring the completion of cilium removal in the later stages of the cell cycle. Plays an important role in recruiting MPHOSPH9, a negative regulator of cilia formation to the distal end of mother centriole. The sequence is that of Kinesin-like protein KIF24 (Kif24) from Mus musculus (Mouse).